The following is a 115-amino-acid chain: ATP-dependent Clp protease adapter protein ClpS (115 aa).

Belongs to the ClpS family. As to quaternary structure, binds to the N-terminal domain of the chaperone ClpA.

Functionally, involved in the modulation of the specificity of the ClpAP-mediated ATP-dependent protein degradation. The sequence is that of ATP-dependent Clp protease adapter protein ClpS from Leptothrix cholodnii (strain ATCC 51168 / LMG 8142 / SP-6) (Leptothrix discophora (strain SP-6)).